A 232-amino-acid polypeptide reads, in one-letter code: 26.5 kDa heat shock protein, mitochondrial (232 aa).

The transit peptide at 1 to 42 (MALARLALRNLQQKLSPSLMGQSCERGLVGNRHNPMKLNRFM) directs the protein to the mitochondrion. A disordered region spans residues 44–82 (TSAGEQEDKMNTEVSVSEKKSPRQNFPRRRGRKSLWRNT). The segment covering 49-64 (QEDKMNTEVSVSEKKS) has biased composition (basic and acidic residues). Positions 69–78 (FPRRRGRKSL) are enriched in basic residues. The 119-residue stretch at 114 to 232 (IFDNFNVNPF…KKNVQEISVE (119 aa)) folds into the sHSP domain.

This sequence belongs to the small heat shock protein (HSP20) family. May form oligomeric structures.

The protein resides in the mitochondrion. This is 26.5 kDa heat shock protein, mitochondrial (HSP26.5) from Arabidopsis thaliana (Mouse-ear cress).